The sequence spans 235 residues: Probable pyridoxal 5'-phosphate synthase subunit PDX1 (235 aa).

The active-site Schiff-base intermediate with D-ribose 5-phosphate is K16. R104 serves as a coordination point for D-glyceraldehyde 3-phosphate. D-ribose 5-phosphate is bound by residues G153 and 174–175; that span reads GS.

Belongs to the PdxS/SNZ family.

The catalysed reaction is aldehydo-D-ribose 5-phosphate + D-glyceraldehyde 3-phosphate + L-glutamine = pyridoxal 5'-phosphate + L-glutamate + phosphate + 3 H2O + H(+). Its pathway is cofactor biosynthesis; pyridoxal 5'-phosphate biosynthesis. Its function is as follows. Catalyzes the formation of pyridoxal 5'-phosphate from ribose 5-phosphate (RBP), glyceraldehyde 3-phosphate (G3P) and ammonia. The ammonia is provided by PDX2. Can also use ribulose 5-phosphate and dihydroxyacetone phosphate as substrates, resulting from enzyme-catalyzed isomerization of RBP and G3P, respectively. Also plays an indirect role in resistance to singlet oxygen-generating photosensitizers. The protein is Probable pyridoxal 5'-phosphate synthase subunit PDX1 of Stellaria longipes (Longstalk starwort).